The chain runs to 658 residues: DNA mismatch repair protein MutL (658 aa).

Residues 114–130 (RQEDSSHATQVKAEDGK) show a composition bias toward basic and acidic residues. Disordered regions lie at residues 114-138 (RQED…TAAA) and 355-405 (PSEN…HSLS).

This sequence belongs to the DNA mismatch repair MutL/HexB family.

In terms of biological role, this protein is involved in the repair of mismatches in DNA. It is required for dam-dependent methyl-directed DNA mismatch repair. May act as a 'molecular matchmaker', a protein that promotes the formation of a stable complex between two or more DNA-binding proteins in an ATP-dependent manner without itself being part of a final effector complex. In Neisseria gonorrhoeae (strain ATCC 700825 / FA 1090), this protein is DNA mismatch repair protein MutL.